Consider the following 165-residue polypeptide: Ribosome maturation factor RimM (165 aa).

One can recognise a PRC barrel domain in the interval 90-161 (EDEYFIVDLV…LITIRPSGEW (72 aa)).

This sequence belongs to the RimM family. As to quaternary structure, binds ribosomal protein uS19.

Its subcellular location is the cytoplasm. Functionally, an accessory protein needed during the final step in the assembly of 30S ribosomal subunit, possibly for assembly of the head region. Essential for efficient processing of 16S rRNA. May be needed both before and after RbfA during the maturation of 16S rRNA. It has affinity for free ribosomal 30S subunits but not for 70S ribosomes. The polypeptide is Ribosome maturation factor RimM (Clostridium perfringens (strain ATCC 13124 / DSM 756 / JCM 1290 / NCIMB 6125 / NCTC 8237 / Type A)).